A 1460-amino-acid chain; its full sequence is MATNARILGFNSPSALVAAGDDFLLGAGGGIVIRRKEESSQWIPCEGRYAIGALAFSPSAGLLCVTEVKLDVSLHVFRFPERHHLQCIDNVATVDVQHMLFSSDGEMLALLTCIPTTCVTFYSAARGNRLVKCASTELGGVFCKHLTFPLHRHDCIAVLEPHGVRIACNMDSATFVPSILTLSSKGHYFHSCVWGTEGLYCGAGRGQVVLLDELRTDMKNYINCETPHNVTALLQNGTLLFIGTECGDVFTYNIDQKAQRLLVRLGRSVVRLLTLPDVNDVLVATSTDVTKISVDTAQSVFVRRRSASDTVKLLVLGGLVVIVCLDGSLVTYDQDTNTAGHTPVRFPEKVVDACVVGSVAVVVYDSGFVRSFTVENTVSVVSQMKVSDCPLTACTSDGVSLLAVCDKNVVHFIEVADGLLETAASSDIFACAVTNLRWAVNGGRSVLAACNNGEVHNLRFTGKCDSASAGVTVDMTWRLDFPVNDFLPLYGDGDVINIFVHSVDKDTKMYALERQRVKESKPLRPYFLMRDHECGGNVLQRLGGDSIISAGGDGRVVVRDISHYLMKLPPVPPTKEKKHPLKEFLLRPFGRGGITCLSVWNAAGGFVCGGNDSVVHLVPVGKSPIHYSWSEPFWHQRAISTSPSRASSPSDAETLSAERSRCRIISALADLRMEVEKLLQERTPTVRAEDFLLPEQRQAFNEECEMEIHKAREDDYYSLVHNEFVQHTIKTECWDVMEVQRSKIVSMTDPETEVHNFHLRKPCAQRAKIQKKIKLMRAIQIKTEECFTLSSLVKRAKEGNLCTEQQVCGPPSDVDELLYDTLDVYTGPRATIQLILLECKILHEKKSFNIRFDTLRERKSRELNLIAERNGRCVRIMQQLGEHTCPPNVLFTPVFDIEEDPQTVFEVFDSEIDPELLKLAVKSDDGELVVSPSDEAALKTWMDGLEKVTEVLRVNVPIPPFADNSLEQYVPPEERSDEQQRIFEEYEKEVAEQTVLINEKKELLRGEVAALVKANMTSAKAIDDEIDVLRTDRMLVAQLVDELELHQVNALCLFLLKKTIRNKFLGVKREEEDLLCRLRQLDSLYEYRLKLYLASEARVQDCIEEEKNMITDMRCLPPFTDPDWGERLNRRFTTWRSKYEDGLAKVPEPTRSGVVPIPLWEQYCQCCRAVVEARDKIIHLRGEADALNDEVVEVETEKKKAQFALDDKEKAEEACRKEVIEKVLDIQNLYTLQQGQVQDENAMVSDDFTDFSIRWVKNITDYNDLIFASFDEIRSLMSRSSQLRQSMKTCSWETERLLYCIGTLEMELRQLHTLRVTRQMQETIHTGAVTSLEREINKMDARIEAVRSVMSKKVEERNRVISKLKMQINDRRAENQYLNNQVQALTNSVEDKKAVWGMLGEHNNDKDRLRERMRELYENSELEELARCQQEELVRLKNEVDRLREATFPSFAVVTRRTAR.

WD repeat units follow at residues 46–87, 91–132, 184–221, 303–342, 428–468, 529–569, 589–628, 911–951, and 1129–1170; these read EGRY…HLQC, VATV…RLVK, SKGH…MKNY, RRRS…AGHT, IFAC…DSAS, MRDH…MKLP, FGRG…IHYS, EIDP…VTEV, and NRRF…CRAV. 2 coiled-coil regions span residues 1170–1214 and 1399–1446; these read VVEA…AEEA and LGEH…LREA.

This sequence belongs to the CFAP43 family.

Its subcellular location is the cell projection. It localises to the cilium. The protein localises to the flagellum. It is found in the cytoplasm. The protein resides in the cytoskeleton. Its subcellular location is the flagellum axoneme. Functionally, flagellar protein involved in flagellum axoneme organization and function. This is Cilia- and flagella-associated protein 43 from Trypanosoma brucei brucei (strain 927/4 GUTat10.1).